The sequence spans 445 residues: UPF0210 protein SUB1511 (445 aa).

It belongs to the UPF0210 family. In terms of assembly, homodimer.

This is UPF0210 protein SUB1511 from Streptococcus uberis (strain ATCC BAA-854 / 0140J).